Here is a 255-residue protein sequence, read N- to C-terminus: Taurine import ATP-binding protein TauB (255 aa).

Positions 2 to 229 constitute an ABC transporter domain; that stretch reads LQISHLYADY…RFVAGESSRS (228 aa). 34 to 41 contacts ATP; the sequence is GPSGCGKT.

The protein belongs to the ABC transporter superfamily. Taurine importer (TC 3.A.1.17.1) family. The complex is composed of two ATP-binding proteins (TauB), two transmembrane proteins (TauC) and a solute-binding protein (TauA).

The protein resides in the cell inner membrane. It catalyses the reaction taurine(out) + ATP + H2O = taurine(in) + ADP + phosphate + H(+). Its function is as follows. Part of the ABC transporter complex TauABC involved in taurine import. Responsible for energy coupling to the transport system. The protein is Taurine import ATP-binding protein TauB of Escherichia coli O6:K15:H31 (strain 536 / UPEC).